Here is a 153-residue protein sequence, read N- to C-terminus: Nucleoside diphosphate kinase (153 aa).

ATP contacts are provided by Lys12, Phe60, Arg88, Thr94, Arg105, and Asn115. His118 (pros-phosphohistidine intermediate) is an active-site residue.

This sequence belongs to the NDK family. The cofactor is Mg(2+).

It is found in the cytoplasm. The catalysed reaction is a 2'-deoxyribonucleoside 5'-diphosphate + ATP = a 2'-deoxyribonucleoside 5'-triphosphate + ADP. The enzyme catalyses a ribonucleoside 5'-diphosphate + ATP = a ribonucleoside 5'-triphosphate + ADP. In terms of biological role, major role in the synthesis of nucleoside triphosphates other than ATP. The ATP gamma phosphate is transferred to the NDP beta phosphate via a ping-pong mechanism, using a phosphorylated active-site intermediate. The chain is Nucleoside diphosphate kinase from Natronomonas pharaonis (strain ATCC 35678 / DSM 2160 / CIP 103997 / JCM 8858 / NBRC 14720 / NCIMB 2260 / Gabara) (Halobacterium pharaonis).